The primary structure comprises 500 residues: Nucleolar and spindle-associated protein 1 (500 aa).

4 disordered regions span residues 48–204 (KNET…NFKK), 241–299 (TKKS…ASKS), 319–353 (VRFS…PESE), and 365–500 (ELLP…VPVK). The segment covering 82–92 (THRRGRGRKPI) has biased composition (basic residues). Polar residues predominate over residues 113–127 (NMASSIDRTQQQNCT). The span at 264 to 274 (SRLSLLSPLPR) shows a compositional bias: low complexity. The span at 276 to 298 (TGASPSRTPMSQRRSCRSSTASK) shows a compositional bias: polar residues. The span at 323-332 (EATKDNEHKR) shows a compositional bias: basic and acidic residues. Polar residues predominate over residues 380–392 (ITLNTTTQPSPAT). Residues 442–451 (PWGESKENKP) show a composition bias toward basic and acidic residues. Over residues 452–469 (DPNSNVSVLKNNYKQPHL) the composition is skewed to polar residues.

Belongs to the NUSAP family. In terms of assembly, interacts with DNA, microtubules, ipo7, kpna2 and kpnb1. Microtubule stabilization is inhibited by ipo7 and kpna2, while microtubule bundling is inhibited by kpnb1. Active GTP-bound ran causes dissociation of ipo7 and kpnb1.

It localises to the cytoplasm. The protein resides in the nucleus. The protein localises to the cytoskeleton. Its subcellular location is the spindle. Its function is as follows. Microtubule-associated protein with the capacity to bundle and stabilize microtubules. May associate with chromosomes and promote the organization of meiotic or mitotic spindle microtubules around them. The chain is Nucleolar and spindle-associated protein 1 (nusap1) from Xenopus tropicalis (Western clawed frog).